Reading from the N-terminus, the 189-residue chain is Apolipoprotein D (189 aa).

The N-terminal stretch at 1–20 (MGMMLLLLSMLAGLVAEAEG) is a signal peptide. At Q21 the chain carries Pyrrolidone carboxylic acid. 2 disulfide bridges follow: C28–C134 and C61–C185. N-linked (GlcNAc...) asparagine glycans are attached at residues N65 and N98.

It belongs to the calycin superfamily. Lipocalin family. Homodimer.

It localises to the secreted. APOD occurs in the macromolecular complex with lecithin-transport and binding of bilin. Appears to be able to transport a variety of ligands in a number of different contexts. The protein is Apolipoprotein D (APOD) of Cavia porcellus (Guinea pig).